Reading from the N-terminus, the 397-residue chain is DnaJ homolog subfamily A member 1 (397 aa).

The region spanning 6–68 (TYYDVLGVKP…KKRELYDKGG (63 aa)) is the J domain. Lysine 66 bears the N6-acetyllysine mark. The residue at position 83 (serine 83) is a Phosphoserine. The segment at 121–205 (GATRKLALQK…CNGRKIVREK (85 aa)) adopts a CR-type zinc-finger fold. The Zn(2+) site is built by cysteine 134, cysteine 137, cysteine 150, cysteine 153, cysteine 177, cysteine 180, cysteine 193, and cysteine 196. 4 CXXCXGXG motif repeats span residues 134–141 (CDKCEGRG), 150–157 (CPNCRGTG), 177–184 (CMECQGHG), and 193–200 (CKSCNGRK). Serine 335 is modified (phosphoserine). Residues 352 to 397 (VEETDEMDQVELVDFDPNQERRRHYNGEAYEDDEHHPRGGVQCQTS) form a disordered region. Acidic residues predominate over residues 353 to 365 (EETDEMDQVELVD). Tyrosine 381 carries the phosphotyrosine modification. Cysteine 394 carries the cysteine methyl ester modification. Cysteine 394 carries S-farnesyl cysteine lipidation. The propeptide at 395-397 (QTS) is removed in mature form.

Identified in a complex with HSPA1B and BAX. Interacts with RNF207.

It localises to the membrane. Its subcellular location is the cytoplasm. It is found in the microsome. The protein resides in the mitochondrion. The protein localises to the nucleus. It localises to the perinuclear region. Its function is as follows. Co-chaperone for HSPA8/Hsc70. Plays a role in protein transport into mitochondria via its role as co-chaperone. Stimulates ATP hydrolysis, but not the folding of unfolded proteins mediated by HSPA1A (in vitro). Promotes apoptosis in response to cellular stress mediated by exposure to anisomycin or UV. Functions as co-chaperone for HSPA1B and negatively regulates the translocation of BAX from the cytosol to mitochondria in response to cellular stress, thereby protecting cells against apoptosis. The sequence is that of DnaJ homolog subfamily A member 1 (Dnaja1) from Mus musculus (Mouse).